The primary structure comprises 315 residues: Calumenin-A (315 aa).

An N-terminal signal peptide occupies residues 1 to 19 (MEIRPLLMCFALCVVYATS). EF-hand domains are found at residues 68 to 103 (ESKN…AQKK), 104 to 139 (YIYD…TYLD), 151 to 186 (QMMA…EEYE), 188 to 223 (MKDI…HEDE), 229 to 264 (WVAT…ADYD), and 265 to 300 (HAEA…FVGS). Asp81, Asp83, Asp85, Glu92, Asp117, Asn119, Asp121, Met123, and Glu128 together coordinate Ca(2+). Asn131 is a glycosylation site (N-linked (GlcNAc...) asparagine). Ca(2+) is bound by residues Asp164, Asn166, Asp168, Glu175, Asp201, Asn203, Asp205, Glu212, Asp242, Asn244, Asp246, Lys248, Glu253, Asp278, Asn280, Asp282, Lys284, and Glu289. The Prevents secretion from ER signature appears at 312-315 (HDEF).

The protein belongs to the CREC family. Interacts with ggcx.

The protein resides in the endoplasmic reticulum membrane. The protein localises to the golgi apparatus. It localises to the secreted. It is found in the melanosome. Its subcellular location is the sarcoplasmic reticulum lumen. Involved in regulation of vitamin K-dependent carboxylation of multiple N-terminal glutamate residues. Seems to inhibit gamma-carboxylase ggcx. Binds 7 calcium ions with a low affinity. This Danio rerio (Zebrafish) protein is Calumenin-A (calua).